Reading from the N-terminus, the 165-residue chain is Xanthine-guanine phosphoribosyltransferase (165 aa).

5-phospho-alpha-D-ribose 1-diphosphate-binding positions include 41 to 42 (RG) and 98 to 106 (DDLTDTGKT). Asp-99 contributes to the Mg(2+) binding site. Residues Asp-102 and Ile-145 each contribute to the guanine site. Residues Asp-102 and Ile-145 each coordinate xanthine. Residues 102 to 106 (DTGKT) and 144 to 145 (WI) each bind GMP.

Belongs to the purine/pyrimidine phosphoribosyltransferase family. XGPT subfamily. In terms of assembly, homotetramer. Mg(2+) is required as a cofactor.

The protein resides in the cell inner membrane. It carries out the reaction GMP + diphosphate = guanine + 5-phospho-alpha-D-ribose 1-diphosphate. It catalyses the reaction XMP + diphosphate = xanthine + 5-phospho-alpha-D-ribose 1-diphosphate. The catalysed reaction is IMP + diphosphate = hypoxanthine + 5-phospho-alpha-D-ribose 1-diphosphate. The protein operates within purine metabolism; GMP biosynthesis via salvage pathway; GMP from guanine: step 1/1. It functions in the pathway purine metabolism; XMP biosynthesis via salvage pathway; XMP from xanthine: step 1/1. In terms of biological role, purine salvage pathway enzyme that catalyzes the transfer of the ribosyl-5-phosphate group from 5-phospho-alpha-D-ribose 1-diphosphate (PRPP) to the N9 position of the 6-oxopurines guanine and xanthine to form the corresponding ribonucleotides GMP (guanosine 5'-monophosphate) and XMP (xanthosine 5'-monophosphate), with the release of PPi. To a lesser extent, also acts on hypoxanthine. The chain is Xanthine-guanine phosphoribosyltransferase from Chelativorans sp. (strain BNC1).